The chain runs to 283 residues: Lectin subunit alpha (283 aa).

Positions 1 to 23 (MSLTMKNVEGFVIFLVIFTSTAA) are cleaved as a signal peptide. Positions 51-159 (HECARHDQQL…NVKMGYICEP (109 aa)) constitute a C-type lectin domain. 2 disulfides stabilise this stretch: cysteine 53–cysteine 157 and cysteine 132–cysteine 149.

Functionally, role in the defense system of the organism against microorganisms. This lectin binds galactose. This Sarcophaga peregrina (Flesh fly) protein is Lectin subunit alpha.